We begin with the raw amino-acid sequence, 396 residues long: RNA polymerase principal sigma factor HrdA (396 aa).

A compositionally biased stretch (basic residues) spans 1–20; that stretch reads MRGGQRRASRLRPPTYRRRP. The tract at residues 1-96 is disordered; it reads MRGGQRRASR…PTRTESGGPS (96 aa). 2 stretches are compositionally biased toward low complexity: residues 33–42 and 56–75; these read QTQTLTQTDT and LLAM…PGAP. Residues 187–200 carry the Polymerase core binding motif; it reads DLVQEGNLGLIRAV. Positions 357–376 form a DNA-binding region, H-T-H motif; sequence LEEIGRLFGVTRERIRQIES.

This sequence belongs to the sigma-70 factor family. Interacts transiently with the RNA polymerase catalytic core. Interacts with RNA polymerase-binding protein RbpA.

Functionally, sigma factors are initiation factors that promote the attachment of RNA polymerase to specific initiation sites and are then released. This is RNA polymerase principal sigma factor HrdA (hrdA) from Streptomyces coelicolor (strain ATCC BAA-471 / A3(2) / M145).